We begin with the raw amino-acid sequence, 307 residues long: Ornithine carbamoyltransferase (307 aa).

Carbamoyl phosphate-binding positions include 56–59 (STRT), Gln83, Arg107, and 134–137 (HPCQ). L-ornithine contacts are provided by residues Asn165, Asp223, and 227-228 (SM). Residues 263-264 (CL) and Arg291 contribute to the carbamoyl phosphate site.

This sequence belongs to the aspartate/ornithine carbamoyltransferase superfamily. OTCase family.

Its subcellular location is the cytoplasm. The enzyme catalyses carbamoyl phosphate + L-ornithine = L-citrulline + phosphate + H(+). The protein operates within amino-acid biosynthesis; L-arginine biosynthesis; L-arginine from L-ornithine and carbamoyl phosphate: step 1/3. In terms of biological role, reversibly catalyzes the transfer of the carbamoyl group from carbamoyl phosphate (CP) to the N(epsilon) atom of ornithine (ORN) to produce L-citrulline. This chain is Ornithine carbamoyltransferase, found in Cupriavidus pinatubonensis (strain JMP 134 / LMG 1197) (Cupriavidus necator (strain JMP 134)).